A 310-amino-acid chain; its full sequence is Glutaminase (310 aa).

Substrate is bound by residues Ser-67, Asn-118, Glu-161, Asn-168, Tyr-192, Tyr-244, and Val-262.

Belongs to the glutaminase family. In terms of assembly, homotetramer.

The catalysed reaction is L-glutamine + H2O = L-glutamate + NH4(+). This is Glutaminase from Legionella pneumophila (strain Lens).